Consider the following 340-residue polypeptide: MIQDEIKVSTQTLQWKCIESKIESKRLLYSRFAISPFRKGQANTVGIAMRRALLNEIEGASITYAKIKKVKHEYSTIIGLQESIHDILINLKEIVLKSESFEPQKAYISVLGPKKITAQDIKGPSCIKIMIIAQYIATLNKDILLEIELNIEKDRGYRIENLQKYQEGLFPVDAVFMPIRNANYSVHSFESEKKIKEILFLEIWTDGSLTPKEALYEASRNLIDLFIPLINSEKKEKNFGIEKTNESNMSYFPFQSVSLDIEKMTKDVAFKHIFIDQLELPARAYNCLKKVNVHTIADLLHYSEDDLIKIKNFGKKSVEQVLEALKKRFSIQLPKNKNYL.

The alpha N-terminal domain (alpha-NTD) stretch occupies residues 1–233 (MIQDEIKVST…DLFIPLINSE (233 aa)). The interval 265 to 340 (TKDVAFKHIF…IQLPKNKNYL (76 aa)) is alpha C-terminal domain (alpha-CTD).

It belongs to the RNA polymerase alpha chain family. As to quaternary structure, in plastids the minimal PEP RNA polymerase catalytic core is composed of four subunits: alpha, beta, beta', and beta''. When a (nuclear-encoded) sigma factor is associated with the core the holoenzyme is formed, which can initiate transcription.

It is found in the plastid. It localises to the chloroplast. It carries out the reaction RNA(n) + a ribonucleoside 5'-triphosphate = RNA(n+1) + diphosphate. Functionally, DNA-dependent RNA polymerase catalyzes the transcription of DNA into RNA using the four ribonucleoside triphosphates as substrates. The protein is DNA-directed RNA polymerase subunit alpha of Marchantia polymorpha (Common liverwort).